The following is a 317-amino-acid chain: NAC domain-containing protein 55 (317 aa).

Positions 14 to 162 constitute an NAC domain; that stretch reads LPPGFRFYPT…DWVLCRIYKK (149 aa). A DNA-binding region spans residues 111 to 168; sequence VGIKKALVFYIGKAPKGTKTNWIMHEYRLIEPSRRNGSTKLDDWVLCRIYKKQTSAQK.

Expressed in leaves.

The protein resides in the nucleus. In terms of biological role, transcription factors that bind specifically to the 5'-CATGTG-3' motif. The protein is NAC domain-containing protein 55 (NAC055) of Arabidopsis thaliana (Mouse-ear cress).